Consider the following 428-residue polypeptide: Trigger factor (428 aa).

Residues 166–250 enclose the PPIase FKBP-type domain; sequence GDIVTFDFKG…IKNIKEKILP (85 aa).

This sequence belongs to the FKBP-type PPIase family. Tig subfamily.

The protein localises to the cytoplasm. The enzyme catalyses [protein]-peptidylproline (omega=180) = [protein]-peptidylproline (omega=0). Functionally, involved in protein export. Acts as a chaperone by maintaining the newly synthesized protein in an open conformation. Functions as a peptidyl-prolyl cis-trans isomerase. This Mycoplasma capricolum subsp. capricolum (strain California kid / ATCC 27343 / NCTC 10154) protein is Trigger factor.